An 864-amino-acid polypeptide reads, in one-letter code: Leucine--tRNA ligase (864 aa).

A 'HIGH' region motif is present at residues Pro42–His52. A 'KMSKS' region motif is present at residues Lys619–Ser623. Lys622 is a binding site for ATP.

Belongs to the class-I aminoacyl-tRNA synthetase family.

The protein resides in the cytoplasm. It carries out the reaction tRNA(Leu) + L-leucine + ATP = L-leucyl-tRNA(Leu) + AMP + diphosphate. This is Leucine--tRNA ligase from Wigglesworthia glossinidia brevipalpis.